The following is a 203-amino-acid chain: Orotate phosphoribosyltransferase (203 aa).

5-phospho-alpha-D-ribose 1-diphosphate contacts are provided by residues Arg-94, Lys-98, His-100, and 120–128 (EDLISTGGS). Ser-124 is a binding site for orotate.

This sequence belongs to the purine/pyrimidine phosphoribosyltransferase family. PyrE subfamily. As to quaternary structure, homodimer. It depends on Mg(2+) as a cofactor.

It catalyses the reaction orotidine 5'-phosphate + diphosphate = orotate + 5-phospho-alpha-D-ribose 1-diphosphate. It functions in the pathway pyrimidine metabolism; UMP biosynthesis via de novo pathway; UMP from orotate: step 1/2. Functionally, catalyzes the transfer of a ribosyl phosphate group from 5-phosphoribose 1-diphosphate to orotate, leading to the formation of orotidine monophosphate (OMP). The polypeptide is Orotate phosphoribosyltransferase (Staphylococcus aureus (strain COL)).